A 117-amino-acid chain; its full sequence is Ig heavy chain V region MOO (117 aa).

The 116-residue stretch at 1–116 (EVKLVESGGD…FGQGTIVTVS (116 aa)) folds into the Ig-like domain.

The sequence is that of Ig heavy chain V region MOO from Canis lupus familiaris (Dog).